The sequence spans 279 residues: Alcohol dehydrogenase-related 31 kDa protein (279 aa).

Residue 11 to 34 (YVADCGGIALETSKVLMTKNIAKL) coordinates NAD(+). Ser139 provides a ligand contact to substrate. Tyr152 (proton acceptor) is an active-site residue.

Belongs to the short-chain dehydrogenases/reductases (SDR) family.

This Drosophila madeirensis (Fruit fly) protein is Alcohol dehydrogenase-related 31 kDa protein (Adhr).